A 205-amino-acid polypeptide reads, in one-letter code: Ribonuclease HII (205 aa).

Positions 22-205 (RFICGVDEAG…RKSFLKNILR (184 aa)) constitute an RNase H type-2 domain. A divalent metal cation is bound by residues D28, E29, and D120.

It belongs to the RNase HII family. Mn(2+) is required as a cofactor. Requires Mg(2+) as cofactor.

It localises to the cytoplasm. It carries out the reaction Endonucleolytic cleavage to 5'-phosphomonoester.. Endonuclease that specifically degrades the RNA of RNA-DNA hybrids. This chain is Ribonuclease HII, found in Caldicellulosiruptor saccharolyticus (strain ATCC 43494 / DSM 8903 / Tp8T 6331).